A 274-amino-acid polypeptide reads, in one-letter code: Glucosamine-6-phosphate deaminase (274 aa).

D72 serves as the catalytic Proton acceptor; for enolization step. Residue D141 is the For ring-opening step of the active site. Catalysis depends on H143, which acts as the Proton acceptor; for ring-opening step. The active-site For ring-opening step is E148.

Belongs to the glucosamine/galactosamine-6-phosphate isomerase family. In terms of assembly, homohexamer.

It localises to the cytoplasm. It catalyses the reaction alpha-D-glucosamine 6-phosphate + H2O = beta-D-fructose 6-phosphate + NH4(+). It functions in the pathway nucleotide-sugar biosynthesis; UDP-N-acetyl-alpha-D-glucosamine biosynthesis; alpha-D-glucosamine 6-phosphate from D-fructose 6-phosphate: step 1/1. In terms of biological role, catalyzes the reversible conversion of alpha-D-glucosamine 6-phosphate (GlcN-6P) into beta-D-fructose 6-phosphate (Fru-6P) and ammonium ion, a regulatory reaction step in de novo uridine diphosphate-N-acetyl-alpha-D-glucosamine (UDP-GlcNAc) biosynthesis via hexosamine pathway. This Drosophila pseudoobscura pseudoobscura (Fruit fly) protein is Glucosamine-6-phosphate deaminase.